The chain runs to 158 residues: Transcriptional repressor NrdR (158 aa).

A zinc finger lies at 3–34; the sequence is CPFCGNADTQVVDSRVSEEGDTIRRRRRCLSC. The ATP-cone domain occupies 49–139; that stretch reads PSVVKRNGSR…VYKNFEDIGE (91 aa).

This sequence belongs to the NrdR family. The cofactor is Zn(2+).

In terms of biological role, negatively regulates transcription of bacterial ribonucleotide reductase nrd genes and operons by binding to NrdR-boxes. This Bordetella petrii (strain ATCC BAA-461 / DSM 12804 / CCUG 43448) protein is Transcriptional repressor NrdR.